The sequence spans 510 residues: Probable malate:quinone oxidoreductase (510 aa).

The protein belongs to the MQO family. FAD is required as a cofactor.

It carries out the reaction (S)-malate + a quinone = a quinol + oxaloacetate. It participates in carbohydrate metabolism; tricarboxylic acid cycle; oxaloacetate from (S)-malate (quinone route): step 1/1. This Wigglesworthia glossinidia brevipalpis protein is Probable malate:quinone oxidoreductase.